The following is a 268-amino-acid chain: CCAAT/enhancer-binding protein delta (268 aa).

Disordered regions lie at residues 1–48 (MSAA…LGST), 97–132 (GLELLQGGPTRPPGVGSVARGPLKREPDWGDGDAPG), and 152–219 (AAQP…NQEM). S2 bears the N-acetylserine mark. K120 is covalently cross-linked (Glycyl lysine isopeptide (Lys-Gly) (interchain with G-Cter in SUMO)). The segment covering 155 to 167 (PTPPTSPEPPRGS) has biased composition (pro residues). Positions 177–201 (VREKGAGKRGPDRGSPEYRQRRERN) are enriched in basic and acidic residues. The region spanning 191 to 254 (SPEYRQRRER…AGLRQFFKKL (64 aa)) is the bZIP domain. Residues 195–222 (RQRRERNNIAVRKSRDKAKRRNQEMQQK) form a basic motif region. The leucine-zipper stretch occupies residues 226–254 (LSAENEKLHQRVEQLTRDLAGLRQFFKKL).

This sequence belongs to the bZIP family. C/EBP subfamily. In terms of assembly, binds DNA as a homodimer and as a heterodimer. Can form stable heterodimers with CEBPA, CEBPB and CEBPE. Directly interacts with SPI1/PU.1; this interaction does not affect DNA-binding properties of each partner. Interacts with PRDM16.

Its subcellular location is the nucleus. Functionally, transcription activator that recognizes two different DNA motifs: the CCAAT homology common to many promoters and the enhanced core homology common to many enhancers. Important transcription factor regulating the expression of genes involved in immune and inflammatory responses. Transcriptional activator that enhances IL6 transcription alone and as heterodimer with CEBPB. The chain is CCAAT/enhancer-binding protein delta (Cebpd) from Mus musculus (Mouse).